The sequence spans 349 residues: Ribosomal RNA large subunit methyltransferase M (349 aa).

S-adenosyl-L-methionine is bound by residues 216–219 (APGG), Asp-235, Asp-255, and Asp-271. Lys-300 serves as the catalytic Proton acceptor.

Belongs to the class I-like SAM-binding methyltransferase superfamily. RNA methyltransferase RlmE family. RlmM subfamily. As to quaternary structure, monomer.

It localises to the cytoplasm. It carries out the reaction cytidine(2498) in 23S rRNA + S-adenosyl-L-methionine = 2'-O-methylcytidine(2498) in 23S rRNA + S-adenosyl-L-homocysteine + H(+). In terms of biological role, catalyzes the 2'-O-methylation at nucleotide C2498 in 23S rRNA. The polypeptide is Ribosomal RNA large subunit methyltransferase M (Saccharophagus degradans (strain 2-40 / ATCC 43961 / DSM 17024)).